A 130-amino-acid chain; its full sequence is Small ribosomal subunit protein uS8 (130 aa).

Belongs to the universal ribosomal protein uS8 family. As to quaternary structure, part of the 30S ribosomal subunit.

Its function is as follows. One of the primary rRNA binding proteins, it binds directly to 16S rRNA central domain where it helps coordinate assembly of the platform of the 30S subunit. This chain is Small ribosomal subunit protein uS8, found in Methanococcus vannielii (strain ATCC 35089 / DSM 1224 / JCM 13029 / OCM 148 / SB).